The following is a 359-amino-acid chain: Peptide chain release factor 1 (359 aa).

Position 235 is an N5-methylglutamine (Q235). The tract at residues Q283–Y309 is disordered.

Belongs to the prokaryotic/mitochondrial release factor family. In terms of processing, methylated by PrmC. Methylation increases the termination efficiency of RF1.

It localises to the cytoplasm. Peptide chain release factor 1 directs the termination of translation in response to the peptide chain termination codons UAG and UAA. This Brucella canis (strain ATCC 23365 / NCTC 10854 / RM-666) protein is Peptide chain release factor 1.